The chain runs to 177 residues: Probasin (177 aa).

The signal sequence occupies residues 1-17 (MRVILLLLTLDVLGVSS). C79 and C170 are joined by a disulfide.

Belongs to the calycin superfamily. Lipocalin family. Prostatic epithelial cells.

It is found in the nucleus. It localises to the secreted. This chain is Probasin (Pbsn), found in Rattus norvegicus (Rat).